Reading from the N-terminus, the 149-residue chain is SsrA-binding protein (149 aa).

Belongs to the SmpB family.

It localises to the cytoplasm. In terms of biological role, required for rescue of stalled ribosomes mediated by trans-translation. Binds to transfer-messenger RNA (tmRNA), required for stable association of tmRNA with ribosomes. tmRNA and SmpB together mimic tRNA shape, replacing the anticodon stem-loop with SmpB. tmRNA is encoded by the ssrA gene; the 2 termini fold to resemble tRNA(Ala) and it encodes a 'tag peptide', a short internal open reading frame. During trans-translation Ala-aminoacylated tmRNA acts like a tRNA, entering the A-site of stalled ribosomes, displacing the stalled mRNA. The ribosome then switches to translate the ORF on the tmRNA; the nascent peptide is terminated with the 'tag peptide' encoded by the tmRNA and targeted for degradation. The ribosome is freed to recommence translation, which seems to be the essential function of trans-translation. The sequence is that of SsrA-binding protein from Anaplasma marginale (strain Florida).